Reading from the N-terminus, the 384-residue chain is Brix domain-containing protein F44G4.1 (384 aa).

2 disordered regions span residues 1 to 58 (MAPK…KVVK) and 82 to 135 (SKAT…PQKE). Residues 18-48 (FVEEEVTGDVDEDGFEQAEDMPDEVDSDEDE) show a composition bias toward acidic residues. Positions 96–114 (LPKSQRGKALKRALRKDKR) are enriched in basic residues. Residues 115–127 (ARQGERAQIRDEL) are compositionally biased toward basic and acidic residues. The Brix domain occupies 177–360 (PKVMITMTPK…LKWLQKGTFD (184 aa)).

The protein is Brix domain-containing protein F44G4.1 of Caenorhabditis elegans.